A 588-amino-acid chain; its full sequence is Glutamate--tRNA ligase (588 aa).

The 'HIGH' region motif lies at 112–122 (PNPDFYLHLGS).

Belongs to the class-I aminoacyl-tRNA synthetase family. Glutamate--tRNA ligase type 2 subfamily.

It is found in the cytoplasm. It carries out the reaction tRNA(Glu) + L-glutamate + ATP = L-glutamyl-tRNA(Glu) + AMP + diphosphate. Its function is as follows. Catalyzes the attachment of glutamate to tRNA(Glu) in a two-step reaction: glutamate is first activated by ATP to form Glu-AMP and then transferred to the acceptor end of tRNA(Glu). This Caldivirga maquilingensis (strain ATCC 700844 / DSM 13496 / JCM 10307 / IC-167) protein is Glutamate--tRNA ligase.